Consider the following 237-residue polypeptide: DNA repair protein RecO (237 aa).

The protein belongs to the RecO family.

In terms of biological role, involved in DNA repair and RecF pathway recombination. This Rickettsia africae (strain ESF-5) protein is DNA repair protein RecO.